A 477-amino-acid polypeptide reads, in one-letter code: Ribulose bisphosphate carboxylase large chain (477 aa).

Residues 1–2 constitute a propeptide that is removed on maturation; sequence MS. Residue Pro-3 is modified to N-acetylproline. An N6,N6,N6-trimethyllysine modification is found at Lys-14. Positions 123 and 173 each coordinate substrate. Lys-175 (proton acceptor) is an active-site residue. Lys-177 contacts substrate. Residues Lys-201, Asp-203, and Glu-204 each coordinate Mg(2+). Lys-201 carries the post-translational modification N6-carboxylysine. The active-site Proton acceptor is the His-294. Positions 295, 327, and 379 each coordinate substrate.

It belongs to the RuBisCO large chain family. Type I subfamily. In terms of assembly, heterohexadecamer of 8 large chains and 8 small chains; disulfide-linked. The disulfide link is formed within the large subunit homodimers. Mg(2+) is required as a cofactor. Post-translationally, the disulfide bond which can form in the large chain dimeric partners within the hexadecamer appears to be associated with oxidative stress and protein turnover.

It is found in the plastid. The protein resides in the chloroplast. The catalysed reaction is 2 (2R)-3-phosphoglycerate + 2 H(+) = D-ribulose 1,5-bisphosphate + CO2 + H2O. It catalyses the reaction D-ribulose 1,5-bisphosphate + O2 = 2-phosphoglycolate + (2R)-3-phosphoglycerate + 2 H(+). Functionally, ruBisCO catalyzes two reactions: the carboxylation of D-ribulose 1,5-bisphosphate, the primary event in carbon dioxide fixation, as well as the oxidative fragmentation of the pentose substrate in the photorespiration process. Both reactions occur simultaneously and in competition at the same active site. This chain is Ribulose bisphosphate carboxylase large chain (rbcL), found in Solanum tuberosum (Potato).